The following is a 327-amino-acid chain: Nucleotide-binding protein CYB_0992 (327 aa).

12-19 provides a ligand contact to ATP; sequence GLTGAGKT.

It belongs to the RapZ-like family.

Displays ATPase and GTPase activities. The sequence is that of Nucleotide-binding protein CYB_0992 from Synechococcus sp. (strain JA-2-3B'a(2-13)) (Cyanobacteria bacterium Yellowstone B-Prime).